Reading from the N-terminus, the 281-residue chain is CDAN1-interacting nuclease 1 (281 aa).

Phosphothreonine is present on Thr114.

The protein resides in the nucleus. It is found in the cytoplasm. In terms of biological role, plays a role in erythroid cell differentiation. This chain is CDAN1-interacting nuclease 1, found in Homo sapiens (Human).